We begin with the raw amino-acid sequence, 280 residues long: DegV domain-containing protein CA_C1624 (280 aa).

Residues 4–279 (IALITDSTSD…PGLLGVVIFK (276 aa)) form the DegV domain. Positions 60 and 93 each coordinate hexadecanoate.

May bind long-chain fatty acids, such as palmitate, and may play a role in lipid transport or fatty acid metabolism. The polypeptide is DegV domain-containing protein CA_C1624 (Clostridium acetobutylicum (strain ATCC 824 / DSM 792 / JCM 1419 / IAM 19013 / LMG 5710 / NBRC 13948 / NRRL B-527 / VKM B-1787 / 2291 / W)).